The following is a 40-amino-acid chain: Serine proteinase-like BMK-CBP (40 aa).

The region spanning 1 to 40 (IFGGTFAKNGEYPWMVVIDLPEFACGGVLISKKFVLTAAH) is the Peptidase S1 domain. Histidine 40 acts as the Charge relay system in catalysis.

The protein belongs to the peptidase S1 family. Expressed by the venom gland.

It is found in the secreted. In terms of biological role, binds in a dose-dependent manner to the breast cancer cell line MCF-7. This Olivierus martensii (Manchurian scorpion) protein is Serine proteinase-like BMK-CBP.